An 88-amino-acid chain; its full sequence is UPF0297 protein LAR_0520 (88 aa).

It belongs to the UPF0297 family.

This chain is UPF0297 protein LAR_0520, found in Limosilactobacillus reuteri subsp. reuteri (strain JCM 1112) (Lactobacillus reuteri).